A 1635-amino-acid polypeptide reads, in one-letter code: U3 small nucleolar RNA-associated protein 10 (1635 aa).

The tract at residues 781–803 (TTSMDAPSDESTKRRRRSSSSTV) is disordered. 2 helical membrane-spanning segments follow: residues 1141–1161 (PELLNVILSLLPLPLFVTVAG) and 1288–1308 (IALSVLALFATFIKRLPSFMV).

The protein belongs to the HEATR1/UTP10 family. In terms of assembly, component of the ribosomal small subunit (SSU) processome.

The protein localises to the nucleus. Its subcellular location is the nucleolus. It is found in the membrane. Its function is as follows. Involved in nucleolar processing of pre-18S ribosomal RNA. Involved in ribosome biosynthesis. This is U3 small nucleolar RNA-associated protein 10 from Yarrowia lipolytica (strain CLIB 122 / E 150) (Yeast).